A 525-amino-acid polypeptide reads, in one-letter code: MSCLKYFLILLMLGLCVSSEENFQYDYLKVPASEFVSSINTIVVVIRQVSSILSQFADFSGDRRLQNAVSDCLDLLDFSSEELTWSASASENPKGKGNGTGDVGSDTRTWLSAALSNQATCMEGFDGTSGLVKSLVAGSLDQLYSMLRELLPLVQPEQKPKAVSKPGPIAKGPKAPPGRKLRDTDEDESLQFPDWVRPDDRKLLESNGRTYDVSVALDGTGNFTKIMDAIKKAPDYSSTRFVIYIKKGLYLENVEIKKKKWNIVMLGDGIDVTVISGNRSFIDGWTTFRSATFAVSGRGFLARDITFQNTAGPEKHQAVALRSDSDLSVFFRCAMRGYQDTLYTHTMRQFYRECTITGTVDFIFGDGTVVFQNCQILAKRGLPNQKNTITAQGRKDVNQPSGFSIQFSNISADADLVPYLNTTRTYLGRPWKLYSRTVFIRNNMSDVVRPEGWLEWNADFALDTLFYGEFMNYGPGSGLSSRVKWPGYHVFNNSDQANNFTVSQFIKGNLWLPSTGVTFSDGLYI.

Residues 1–19 (MSCLKYFLILLMLGLCVSS) form the signal peptide. The tract at residues 30–153 (VPASEFVSSI…YSMLRELLPL (124 aa)) is pectinesterase inhibitor 44. Asparagine 98 is a glycosylation site (N-linked (GlcNAc...) asparagine). Positions 157–192 (EQKPKAVSKPGPIAKGPKAPPGRKLRDTDEDESLQF) are disordered. Positions 212 to 509 (DVSVALDGTG…FTVSQFIKGN (298 aa)) are pectinesterase 44. Asparagine 222 and asparagine 278 each carry an N-linked (GlcNAc...) asparagine glycan. Substrate contacts are provided by threonine 287 and glutamine 317. The Proton donor; for pectinesterase activity role is filled by aspartate 340. Cysteines 354 and 374 form a disulfide. Aspartate 361 (nucleophile; for pectinesterase activity) is an active-site residue. N-linked (GlcNAc...) asparagine glycans are attached at residues asparagine 409 and asparagine 421. Substrate contacts are provided by arginine 429 and tryptophan 431. N-linked (GlcNAc...) asparagine glycosylation is found at asparagine 443, asparagine 492, and asparagine 499.

It in the N-terminal section; belongs to the PMEI family. In the C-terminal section; belongs to the pectinesterase family. As to expression, expressed in siliques.

It localises to the secreted. Its subcellular location is the cell wall. It catalyses the reaction [(1-&gt;4)-alpha-D-galacturonosyl methyl ester](n) + n H2O = [(1-&gt;4)-alpha-D-galacturonosyl](n) + n methanol + n H(+). It functions in the pathway glycan metabolism; pectin degradation; 2-dehydro-3-deoxy-D-gluconate from pectin: step 1/5. Acts in the modification of cell walls via demethylesterification of cell wall pectin. The polypeptide is Probable pectinesterase/pectinesterase inhibitor 44 (PME44) (Arabidopsis thaliana (Mouse-ear cress)).